A 776-amino-acid chain; its full sequence is Reticulon-1 (776 aa).

4 disordered regions span residues 1-101, 137-168, 205-245, and 285-580; these read MAAP…KDGE, SESPEELGTPGPSLPDVPGIESRGLFSSDSGI, VKHQ…PAPV, and LTEI…APPP. A Phosphoserine modification is found at serine 327. Positions 328–341 are enriched in low complexity; sequence PGSITPPSSGTEPS. Phosphoserine is present on residues serine 350, serine 352, and serine 487. Basic and acidic residues predominate over residues 497 to 511; the sequence is AIREETGVRAEERAP. One can recognise a Reticulon domain in the interval 589–776; sequence AIDLLYWRDI…KIPGAKRHAE (188 aa). Transmembrane regions (helical) follow at residues 603–623 and 705–725; these read IVFGSFLLLLFSLTQFSVVSV and FAVLMWLLTYVGALFNGLTLL.

In terms of assembly, interacts with NDRG1. Interacts with BACE1. Interacts with TMEM33. As to quaternary structure, interacts with UGCG; regulates the ceramide glucosyltransferase activity of UGCG. Isoforms RTN1-A and RTN1-B are phosphorylated. In terms of tissue distribution, expressed in neural and neuroendocrine tissues and cell cultures derived therefrom. Expression of isoform RTN1-C is strongly correlated with neuronal differentiation.

The protein localises to the endoplasmic reticulum membrane. Its subcellular location is the golgi apparatus membrane. Inhibits amyloid precursor protein processing, probably by blocking BACE1 activity. The sequence is that of Reticulon-1 (RTN1) from Homo sapiens (Human).